Reading from the N-terminus, the 526-residue chain is Osmo-independent choline transporter BetT1 (526 aa).

Over 1–17 (MWSKRDEQKTYPPIRLN) the chain is Cytoplasmic. Residues 18-38 (PFVFWSSAISISIFGMLFVLF) traverse the membrane as a helical segment. Topologically, residues 39-56 (PETSQHGLTWIQQQVNQL) are periplasmic. A helical transmembrane segment spans residues 57-77 (FGWYYMLVIILSLGFVAWLAF). Topologically, residues 78-93 (SQVGNIPLGKAQDKPE) are cytoplasmic. Residues 94–114 (FGYLVWTSMLFSAGIGIALLY) traverse the membrane as a helical segment. Over 115-148 (YGVAEPVDHFLRPPEGQGGTVEAAQNAMMYSFLH) the chain is Periplasmic. The chain crosses the membrane as a helical span at residues 149–169 (WGIHGWVLYALVGVTLGYFAF). The Cytoplasmic segment spans residues 170–200 (RRDLPLALRSALYPIFGERIHGLVGHMVDGF). The chain crosses the membrane as a helical span at residues 201-221 (GILATIISLVTNLGIGALVMI). Over 222-236 (SGISYLFPDLPNTSS) the chain is Periplasmic. Residues 237 to 257 (TLVVTVIMMMLVATLTTVIGI) traverse the membrane as a helical segment. Residues 258-272 (EKGLAWLSRINLRLL) lie on the Cytoplasmic side of the membrane. The chain crosses the membrane as a helical span at residues 273 to 293 (YLLLLFVFLTGPTNHLLNGLV). Residues 294-323 (QNTGDYLSHFVQKSFDLYLYDKNATGWLAS) are Periplasmic-facing. The chain crosses the membrane as a helical span at residues 324–344 (WTIFYWAWWIAWAPFVGMFIA). The Cytoplasmic portion of the chain corresponds to 345 to 354 (RISKGRTIRE). The chain crosses the membrane as a helical span at residues 355 to 375 (VVLGVCLIPLGFTLAWISIFG). Over 376–417 (NTAIDLILNHGQQIIGSLVIQDPALSLFKLLEYLPFHPYVAG) the chain is Periplasmic. The helical transmembrane segment at 418–438 (IVVVICFVLFLTPVGSGTLMI) threads the bilayer. The Cytoplasmic segment spans residues 439-457 (ANLSSQGGSSDSDSPIWLR). The chain crosses the membrane as a helical span at residues 458-478 (VFWSIAITIVSIGLLLAGSFS). Residues 479–482 (AMQS) are Periplasmic-facing. The helical transmembrane segment at 483-503 (AVVLCGLPFSVILLLYMFGLA) threads the bilayer. The Cytoplasmic portion of the chain corresponds to 504-526 (KALKQETQQPVVESHTTETSGSD).

The protein belongs to the BCCT transporter (TC 2.A.15) family.

Its subcellular location is the cell inner membrane. Its function is as follows. Sodium-independent high-affinity choline uptake system. Uptake is not proton coupled. May play a role in metabolic adaptation to choline-containing environments. This chain is Osmo-independent choline transporter BetT1, found in Acinetobacter baylyi (strain ATCC 33305 / BD413 / ADP1).